Consider the following 738-residue polypeptide: 1,4-alpha-glucan branching enzyme GlgB (738 aa).

The Nucleophile role is filled by D399. The active-site Proton donor is E452.

Belongs to the glycosyl hydrolase 13 family. GlgB subfamily. In terms of assembly, monomer.

It carries out the reaction Transfers a segment of a (1-&gt;4)-alpha-D-glucan chain to a primary hydroxy group in a similar glucan chain.. It functions in the pathway glycan biosynthesis; glycogen biosynthesis. Catalyzes the formation of the alpha-1,6-glucosidic linkages in glycogen by scission of a 1,4-alpha-linked oligosaccharide from growing alpha-1,4-glucan chains and the subsequent attachment of the oligosaccharide to the alpha-1,6 position. The polypeptide is 1,4-alpha-glucan branching enzyme GlgB (Chlamydia trachomatis serovar L2 (strain ATCC VR-902B / DSM 19102 / 434/Bu)).